A 144-amino-acid polypeptide reads, in one-letter code: MSEQKPNKKPEKKPDITFFHPDLLEAPADGRAPYLKGYRCKKCGQLDFPKLSPCPSCWGEEFEVVPLSRRGKLYSFSDNFIGQAGMKTPYSFGYIDLPENLRIFAQLEGAPGSFRCDDEVELTVGTVRDNRDGVPLISYKFRKI.

Positions 40, 43, 54, and 57 each coordinate Zn(2+).

Belongs to the BbsA family. Heterotetramer composed of two BbsA subunits and two BbsB subunits. BbsA forms homodimeric subcomplexes. Both BbsA and BbsB are essential for enzymatic activity.

It carries out the reaction (S)-2-benzoylsuccinyl-CoA + CoA = benzoyl-CoA + succinyl-CoA. It functions in the pathway xenobiotic degradation; toluene degradation. In terms of biological role, component of the BbsAB thiolase complex, which catalyzes the thiolytic cleavage of (S)-2-benzoylsuccinyl-CoA to succinyl-CoA and benzoyl-CoA, the final step of anaerobic toluene metabolism. The BbsA subunit critically contributes to an induced-fit process for productive binding of a CoA substrate into the active site of BbsB. This chain is Benzoylsuccinyl-CoA thiolase subunit BbsA, found in Thauera aromatica.